The chain runs to 101 residues: Phosphoribosyl-AMP cyclohydrolase (101 aa).

Mg(2+) is bound at residue aspartate 71. Residue cysteine 72 participates in Zn(2+) binding. Mg(2+) is bound by residues aspartate 73 and aspartate 75. Residues cysteine 88 and cysteine 95 each coordinate Zn(2+).

Belongs to the PRA-CH family. In terms of assembly, homodimer. Mg(2+) is required as a cofactor. Requires Zn(2+) as cofactor.

It localises to the cytoplasm. It catalyses the reaction 1-(5-phospho-beta-D-ribosyl)-5'-AMP + H2O = 1-(5-phospho-beta-D-ribosyl)-5-[(5-phospho-beta-D-ribosylamino)methylideneamino]imidazole-4-carboxamide. It functions in the pathway amino-acid biosynthesis; L-histidine biosynthesis; L-histidine from 5-phospho-alpha-D-ribose 1-diphosphate: step 3/9. Functionally, catalyzes the hydrolysis of the adenine ring of phosphoribosyl-AMP. The polypeptide is Phosphoribosyl-AMP cyclohydrolase (Bacillus cereus (strain ZK / E33L)).